A 434-amino-acid polypeptide reads, in one-letter code: F-box/LRR-repeat protein 21 (434 aa).

Residues 39–85 (RLDWGSLPHRVVLCVFQYLPLIDRARASSVCRRWNEVFHIPDLWRKF) form the F-box domain. LRR repeat units lie at residues 140 to 165 (LVNCSTQTLGLISTAKPSFMTMSKSH), 187 to 213 (DTPVDDPSLSILVANNSDTLRRLKMSS), 214 to 239 (CPHVSSDGILCVADHCQGLRELALNY), 242 to 265 (LSDELLLALSNETHVNLEHLRIDV), 322 to 347 (GRSVSKGILGRLSLNCPRLVELVVCA), 349 to 374 (GIQVIDNELICIAEHCKNLTALGLSE), and 375 to 400 (CEVSCTAFIEFVRLCGRKLTHLSIME).

As to quaternary structure, part of the SCF (SKP1-CUL1-F-box) E3 ubiquitin-protein ligase complex SCF(FBXL21) composed of CUL1, SKP1, RBX1 and FBXL21. Interacts with CRY2. Interacts with CRY1. As to expression, expressed in the adenohypophysis, hypothalamus (especially in the suprachiasmatic nucleus or nuclei, SCN) and pineal, all neuroendocrine structures associated with timing and homeostasis.

The protein resides in the cytoplasm. The protein localises to the cytosol. It is found in the nucleus. The protein operates within protein modification; protein ubiquitination. Its function is as follows. Substrate-recognition component of the SCF(FBXL21) E3 ubiquitin ligase complex involved in circadian rhythm function. Plays a key role in the maintenance of both the speed and the robustness of the circadian clock oscillation. The SCF(FBXL21) complex mainly acts in the cytosol and mediates ubiquitination of CRY proteins (CRY1 and CRY2), leading to CRY proteins stabilization. The SCF(FBXL21) complex counteracts the activity of the SCF(FBXL3) complex and protects CRY proteins from degradation. Involved in the hypothalamic suprachiasmatic nucleus (SCN) clock regulating temporal organization of the daily activities. This chain is F-box/LRR-repeat protein 21 (Fbxl21), found in Ovis aries (Sheep).